Here is an 822-residue protein sequence, read N- to C-terminus: Sushi domain-containing protein 2 (822 aa).

The signal sequence occupies residues 1–27; sequence MKPALLPWALLLLATALGPGPGPTADA. The 39-residue stretch at 28–66 folds into the SMB domain; that stretch reads QESCSMRCGALDGPCSCHPTCSGLGTCCLDFRDFCLEIL. Residues 28-785 lie on the Extracellular side of the membrane; it reads QESCSMRCGA…PKCQPGRSYA (758 aa). 7 disulfide bridges follow: Cys-31/Cys-35, Cys-31/Cys-44, Cys-35/Cys-62, Cys-42/Cys-44, Cys-42/Cys-55, Cys-48/Cys-54, and Cys-55/Cys-62. N-linked (GlcNAc...) asparagine glycosylation is found at Asn-162 and Asn-177. In terms of domain architecture, AMOP spans 285 to 433; it reads PVAWARTQCQ…PDCPRYMQRR (149 aa). Positions 445-639 constitute a VWFD domain; that stretch reads RLASAFGDPH…NWTVHNASSL (195 aa). Residue Asn-522 is glycosylated (N-linked (GlcNAc...) asparagine). A Sushi domain is found at 723–780; sequence VSCGWLAPPPNGQKEGNRYLAGSTIYFHCDNGYSLAGAETSTCQADGTWSSPTPKCQP. Intrachain disulfides connect Cys-725-Cys-765 and Cys-751-Cys-778. The chain crosses the membrane as a helical span at residues 786 to 806; it reads VLLGIIFGGLAVVAAVALVYV. Topologically, residues 807–822 are cytoplasmic; that stretch reads LLRRRKGNTHVWGAQP.

In terms of assembly, interacts with LGALS1; leads to an increased amount of LGALS1 on the cell surface. Interacts with GPR15LG; the interaction is direct. Highly expressed in breast cancer, but shows a restricted expression pattern in normal tissues such as adipose, adrenal gland, kidney, lung, mammary gland, placenta, thyroid, trachea, and uterus. Also expressed in colon; down-regulated in colon cancer tissues.

It localises to the cell membrane. May be a cytokine receptor for GPR15LG. May be a tumor suppressor; together with GPR15LG has a growth inhibitory effect on colon cancer cells which includes G1 cell cycle arrest. May play a role in breast tumorigenesis. This is Sushi domain-containing protein 2 (SUSD2) from Homo sapiens (Human).